A 358-amino-acid chain; its full sequence is Photosystem II protein D1 2 (358 aa).

A run of 3 helical transmembrane segments spans residues 28–45 (YVGW…AATI), 117–132 (HFLI…QWEL), and 141–155 (WICV…AAMA). Histidine 117 contacts chlorophyll a. Tyrosine 125 is a binding site for pheophytin a. Positions 169 and 188 each coordinate [CaMn4O5] cluster. A helical transmembrane segment spans residues 196-217 (FHMLGVAGVFGGSLFSAMHGSL). Residue histidine 197 coordinates chlorophyll a. A quinone contacts are provided by residues histidine 214 and 263 to 264 (SF). Residue histidine 214 coordinates Fe cation. Histidine 271 contacts Fe cation. A helical transmembrane segment spans residues 273–287 (FLGAWPVVGIWFTSM). The [CaMn4O5] cluster site is built by histidine 331, glutamate 332, aspartate 341, and alanine 343. A propeptide spanning residues 344–358 (AAESTPVALQAPAIG) is cleaved from the precursor.

This sequence belongs to the reaction center PufL/M/PsbA/D family. As to quaternary structure, PSII is composed of 1 copy each of membrane proteins PsbA, PsbB, PsbC, PsbD, PsbE, PsbF, PsbH, PsbI, PsbJ, PsbK, PsbL, PsbM, PsbT, PsbX, PsbY, PsbZ, Psb30/Ycf12, peripheral proteins PsbO, CyanoQ (PsbQ), PsbU, PsbV and a large number of cofactors. It forms dimeric complexes. The D1/D2 heterodimer binds P680, chlorophylls that are the primary electron donor of PSII, and subsequent electron acceptors. It shares a non-heme iron and each subunit binds pheophytin, quinone, additional chlorophylls, carotenoids and lipids. D1 provides most of the ligands for the Mn4-Ca-O5 cluster of the oxygen-evolving complex (OEC). There is also a Cl(-1) ion associated with D1 and D2, which is required for oxygen evolution. The PSII complex binds additional chlorophylls, carotenoids and specific lipids. serves as cofactor. Tyr-160 forms a radical intermediate that is referred to as redox-active TyrZ, YZ or Y-Z. In terms of processing, C-terminally processed by CtpA; processing is essential to allow assembly of the oxygen-evolving complex and thus photosynthetic growth.

It is found in the cellular thylakoid membrane. The catalysed reaction is 2 a plastoquinone + 4 hnu + 2 H2O = 2 a plastoquinol + O2. In terms of biological role, photosystem II (PSII) is a light-driven water:plastoquinone oxidoreductase that uses light energy to abstract electrons from H(2)O, generating O(2) and a proton gradient subsequently used for ATP formation. It consists of a core antenna complex that captures photons, and an electron transfer chain that converts photonic excitation into a charge separation. The D1/D2 (PsbA/PsbD) reaction center heterodimer binds P680, the primary electron donor of PSII as well as several subsequent electron acceptors. The chain is Photosystem II protein D1 2 from Synechococcus sp. (strain CC9605).